Reading from the N-terminus, the 88-residue chain is UPF0237 protein spr0217 (88 aa).

In terms of domain architecture, ACT spans 4-77; the sequence is IITVVGKDKS…QTLNVKINIQ (74 aa).

This sequence belongs to the UPF0237 family. As to quaternary structure, homodimer.

This Streptococcus pneumoniae (strain ATCC BAA-255 / R6) protein is UPF0237 protein spr0217.